The primary structure comprises 162 residues: ATP synthase subunit b (162 aa).

A helical transmembrane segment spans residues 16 to 36 (GISGGTIIYQLLMFIILLALL).

The protein belongs to the ATPase B chain family. F-type ATPases have 2 components, F(1) - the catalytic core - and F(0) - the membrane proton channel. F(1) has five subunits: alpha(3), beta(3), gamma(1), delta(1), epsilon(1). F(0) has three main subunits: a(1), b(2) and c(10-14). The alpha and beta chains form an alternating ring which encloses part of the gamma chain. F(1) is attached to F(0) by a central stalk formed by the gamma and epsilon chains, while a peripheral stalk is formed by the delta and b chains.

It localises to the cell membrane. In terms of biological role, f(1)F(0) ATP synthase produces ATP from ADP in the presence of a proton or sodium gradient. F-type ATPases consist of two structural domains, F(1) containing the extramembraneous catalytic core and F(0) containing the membrane proton channel, linked together by a central stalk and a peripheral stalk. During catalysis, ATP synthesis in the catalytic domain of F(1) is coupled via a rotary mechanism of the central stalk subunits to proton translocation. Its function is as follows. Component of the F(0) channel, it forms part of the peripheral stalk, linking F(1) to F(0). This chain is ATP synthase subunit b, found in Bacillus caldotenax.